The chain runs to 307 residues: MNYLEFEVIWGVNNIYSILELNSKLIYEGIFKGKVLETGCKEYSPLVPGDIVLGYIYSSRKVYIDKRLSRKNILWRYNKKADLRQTIVSNIDNVLIVSSANFPEMKNFFIDRVLIVAEEQNIVPIIVINKIDKGISQKAQEFSEIYENLGYKVLKTSVKTYEGIKEVKEVLKNSRTSFIGQSGVGKSSLINLIDSRASQSVNEISHKYSRGKHTTVYSISFHSDSGIIVDTPGIKEFGIETLPFENLKYYFKEFENFASFCKYKSCLHVSEPYCSVTSSLDNGISKLRYESYLKILSELKNYKNYAR.

In terms of domain architecture, CP-type G spans 80–237; sequence KADLRQTIVS…IVDTPGIKEF (158 aa). Residues 129-132 and 180-188 each bind GTP; these read NKID and GQSGVGKSS. Positions 261, 266, 268, and 274 each coordinate Zn(2+).

Belongs to the TRAFAC class YlqF/YawG GTPase family. RsgA subfamily. In terms of assembly, monomer. Associates with 30S ribosomal subunit, binds 16S rRNA. Zn(2+) is required as a cofactor.

Its subcellular location is the cytoplasm. In terms of biological role, one of several proteins that assist in the late maturation steps of the functional core of the 30S ribosomal subunit. Helps release RbfA from mature subunits. May play a role in the assembly of ribosomal proteins into the subunit. Circularly permuted GTPase that catalyzes slow GTP hydrolysis, GTPase activity is stimulated by the 30S ribosomal subunit. The protein is Small ribosomal subunit biogenesis GTPase RsgA of Borreliella burgdorferi (strain ATCC 35210 / DSM 4680 / CIP 102532 / B31) (Borrelia burgdorferi).